We begin with the raw amino-acid sequence, 298 residues long: Inosose dehydratase (298 aa).

The protein belongs to the IolE/MocC family. It depends on glutathione as a cofactor. Requires Co(2+) as cofactor. The cofactor is Mn(2+).

It catalyses the reaction scyllo-inosose = 3D-3,5/4-trihydroxycyclohexane-1,2-dione + H2O. Catalyzes the dehydration of inosose (2-keto-myo-inositol, 2KMI or 2,4,6/3,5-pentahydroxycyclohexanone) to 3D-(3,5/4)-trihydroxycyclohexane-1,2-dione (D-2,3-diketo-4-deoxy-epi-inositol). The sequence is that of Inosose dehydratase from Histophilus somni (strain 129Pt) (Haemophilus somnus).